Reading from the N-terminus, the 350-residue chain is Cell division protein ZipA (350 aa).

At 1 to 6 (MEDLQL) the chain is on the periplasmic side. A helical transmembrane segment spans residues 7 to 27 (VLFVLGAIAIVAVLVHGFWSI). Residues 28–350 (RKQQPRTIKE…QYLARIRANA (323 aa)) lie on the Cytoplasmic side of the membrane. 3 disordered regions span residues 36 to 55 (KEQP…AEGF), 65 to 136 (VRKL…PSAR), and 187 to 213 (RVPA…EEPL). 2 stretches are compositionally biased toward basic and acidic residues: residues 65–109 (VRKL…ESRA) and 116–131 (AAHE…HEEP).

The protein belongs to the ZipA family. As to quaternary structure, interacts with FtsZ via their C-terminal domains.

Its subcellular location is the cell inner membrane. In terms of biological role, essential cell division protein that stabilizes the FtsZ protofilaments by cross-linking them and that serves as a cytoplasmic membrane anchor for the Z ring. Also required for the recruitment to the septal ring of downstream cell division proteins. The sequence is that of Cell division protein ZipA from Shewanella amazonensis (strain ATCC BAA-1098 / SB2B).